The primary structure comprises 259 residues: Kallikrein 1-related peptidase b22 (259 aa).

An N-terminal signal peptide occupies residues Met-1–Ala-17. Residues Ala-18–Arg-24 constitute a propeptide, activation peptide. The Peptidase S1 domain occupies Ile-25–Ala-256. Cystine bridges form between Cys-31-Cys-171, Cys-50-Cys-66, Cys-150-Cys-217, Cys-182-Cys-196, and Cys-207-Cys-232. Residue His-65 is the Charge relay system of the active site. N-linked (GlcNAc...) asparagine glycosylation occurs at Asn-102. The active-site Charge relay system is Asp-118. The active-site Charge relay system is the Ser-211.

The protein belongs to the peptidase S1 family. Kallikrein subfamily.

It carries out the reaction Preferential cleavage of Arg-|-Xaa bonds in small molecule substrates. Highly selective action to release kallidin (lysyl-bradykinin) from kininogen involves hydrolysis of Met-|-Xaa or Leu-|-Xaa.. Its function is as follows. Glandular kallikreins cleave Met-Lys and Arg-Ser bonds in kininogen to release Lys-bradykinin. The sequence is that of Kallikrein 1-related peptidase b22 (Klk1b22) from Mus musculus (Mouse).